A 208-amino-acid polypeptide reads, in one-letter code: Redox-sensing transcriptional repressor Rex (208 aa).

A DNA-binding region (H-T-H motif) is located at residues 16–55; the sequence is LYYRCLSELNEKGEDKVSSAVLERLLKIDAATVRRDFSYF. 90-95 serves as a coordination point for NAD(+); it reads GVGNLG.

The protein belongs to the transcriptional regulatory Rex family. Homodimer.

Its subcellular location is the cytoplasm. Functionally, modulates transcription in response to changes in cellular NADH/NAD(+) redox state. The polypeptide is Redox-sensing transcriptional repressor Rex (Pediococcus pentosaceus (strain ATCC 25745 / CCUG 21536 / LMG 10740 / 183-1w)).